A 50-amino-acid chain; its full sequence is U-megalopygitoxin(9)-Mo13 (50 aa).

Positions 1-23 (MKLVFLFFIVAVMVSLFVGMTEA) are cleaved as a signal peptide. An intrachain disulfide couples cysteine 33 to cysteine 40.

Belongs to the caterpillar 9 family. In terms of tissue distribution, expressed by the venom apparatus.

The protein resides in the secreted. Its function is as follows. Probable toxin. In Megalopyge opercularis (Southern flannel moth), this protein is U-megalopygitoxin(9)-Mo13.